A 159-amino-acid chain; its full sequence is 2-amino-4-hydroxy-6-hydroxymethyldihydropteridine pyrophosphokinase (159 aa).

This sequence belongs to the HPPK family. Monomer.

It carries out the reaction 6-hydroxymethyl-7,8-dihydropterin + ATP = (7,8-dihydropterin-6-yl)methyl diphosphate + AMP + H(+). It functions in the pathway cofactor biosynthesis; tetrahydrofolate biosynthesis; 2-amino-4-hydroxy-6-hydroxymethyl-7,8-dihydropteridine diphosphate from 7,8-dihydroneopterin triphosphate: step 4/4. Its function is as follows. Catalyzes the transfer of pyrophosphate from adenosine triphosphate (ATP) to 6-hydroxymethyl-7,8-dihydropterin, an enzymatic step in folate biosynthesis pathway. The sequence is that of 2-amino-4-hydroxy-6-hydroxymethyldihydropteridine pyrophosphokinase (folK) from Escherichia coli (strain K12).